We begin with the raw amino-acid sequence, 81 residues long: Large ribosomal subunit protein bL31B (81 aa).

The protein belongs to the bacterial ribosomal protein bL31 family. Type B subfamily. Part of the 50S ribosomal subunit.

This is Large ribosomal subunit protein bL31B from Lactobacillus helveticus (strain DPC 4571).